The chain runs to 358 residues: E3 ubiquitin-protein ligase SIS3 (358 aa).

The N-terminal stretch at 1–27 (MAMRGVDFKWYDGFFLSMLATSVIIVA) is a signal peptide. Transmembrane regions (helical) follow at residues 40–60 (LHIWIVVDYTTVFIFRVFMFV), 85–105 (VVVLSVLSLLLYPFLWAWTVI), and 125–145 (GFLIWLMFSYCGLLCIAFICV). The RING-type; atypical zinc-finger motif lies at 235-276 (CLICLEEFHIGHEVRGLPCAHNFHVECIDQWLRLNVKCPRCR). The tract at residues 336–358 (TALETAENGGVPPVLTDLSPSRR) is disordered.

As to expression, expressed in roots, stems, leaves, flowers and siliques.

The protein resides in the membrane. It carries out the reaction S-ubiquitinyl-[E2 ubiquitin-conjugating enzyme]-L-cysteine + [acceptor protein]-L-lysine = [E2 ubiquitin-conjugating enzyme]-L-cysteine + N(6)-ubiquitinyl-[acceptor protein]-L-lysine.. It functions in the pathway protein modification; protein ubiquitination. Functionally, E3 ubiquitin protein ligase that acts as a positive regulator of sugar signaling during early seedling development. Possesses E3 ligase activity in vitro. The sequence is that of E3 ubiquitin-protein ligase SIS3 (SIS3) from Arabidopsis thaliana (Mouse-ear cress).